The following is a 197-amino-acid chain: Syndecan-4 (197 aa).

Positions 1 to 19 (MPLPRAAFLLGLLLAAAAA) are cleaved as a signal peptide. Residues 20–147 (ESVRETETMD…SIFERTEVLT (128 aa)) are Extracellular-facing. O-linked (Xyl...) (glycosaminoglycan) serine glycans are attached at residues Ser38, Ser65, and Ser67. 2 N-linked (GlcNAc...) asparagine glycosylation sites follow: Asn124 and Asn136. Residues 148 to 168 (ALIAGGAVGLLFAVFLILLLV) traverse the membrane as a helical segment. The Cytoplasmic portion of the chain corresponds to 169–197 (YRMKKKDEGSYDLGKKPIYKKAPTNEFYA).

This sequence belongs to the syndecan proteoglycan family. As to quaternary structure, interacts with SDOS. O-glycosylated; contains both chondroitin sulfate and heparan sulfate. Ser-38, Ser-65 and Ser-67 can all be modified by either chondroitin sulfate or heparan sulfate, and the protein exists in forms that contain only chondroitin sulfate, only heparan sulfate and both chondroitin sulfate and heparan sulfate.

Its subcellular location is the membrane. Functionally, cell surface proteoglycan which regulates exosome biogenesis in concert with SDCBP and PDCD6IP. The sequence is that of Syndecan-4 (SDC4) from Gallus gallus (Chicken).